The sequence spans 518 residues: Membrane-bound lytic murein transglycosylase F (518 aa).

An N-terminal signal peptide occupies residues 1-21; sequence MKKLKINYLFIGILALLLAVA. The non-LT domain stretch occupies residues 22 to 269; it reads LWPSIPWFGK…RIEEKYLGHG (248 aa). The segment at 270–518 is LT domain; that stretch reads DDFDYVDTRT…SRKGSEEKQN (249 aa). E314 is an active-site residue.

The protein in the N-terminal section; belongs to the bacterial solute-binding protein 3 family. It in the C-terminal section; belongs to the transglycosylase Slt family.

It is found in the cell outer membrane. The catalysed reaction is Exolytic cleavage of the (1-&gt;4)-beta-glycosidic linkage between N-acetylmuramic acid (MurNAc) and N-acetylglucosamine (GlcNAc) residues in peptidoglycan, from either the reducing or the non-reducing ends of the peptidoglycan chains, with concomitant formation of a 1,6-anhydrobond in the MurNAc residue.. Murein-degrading enzyme that degrades murein glycan strands and insoluble, high-molecular weight murein sacculi, with the concomitant formation of a 1,6-anhydromuramoyl product. Lytic transglycosylases (LTs) play an integral role in the metabolism of the peptidoglycan (PG) sacculus. Their lytic action creates space within the PG sacculus to allow for its expansion as well as for the insertion of various structures such as secretion systems and flagella. The chain is Membrane-bound lytic murein transglycosylase F from Escherichia coli O157:H7.